Consider the following 345-residue polypeptide: S-adenosylmethionine:tRNA ribosyltransferase-isomerase (345 aa).

Belongs to the QueA family. In terms of assembly, monomer.

It localises to the cytoplasm. The enzyme catalyses 7-aminomethyl-7-carbaguanosine(34) in tRNA + S-adenosyl-L-methionine = epoxyqueuosine(34) in tRNA + adenine + L-methionine + 2 H(+). It participates in tRNA modification; tRNA-queuosine biosynthesis. Transfers and isomerizes the ribose moiety from AdoMet to the 7-aminomethyl group of 7-deazaguanine (preQ1-tRNA) to give epoxyqueuosine (oQ-tRNA). The polypeptide is S-adenosylmethionine:tRNA ribosyltransferase-isomerase (Anaeromyxobacter sp. (strain K)).